The primary structure comprises 381 residues: Arogenate dehydratase/prephenate dehydratase 2, chloroplastic (381 aa).

Residues 1 to 32 (MAMHTVRLSPATQLHGGISSNLSPPNRKPNNS) form a disordered region. The N-terminal 66 residues, 1-66 (MAMHTVRLSP…DANGRDNSVR (66 aa)), are a transit peptide targeting the chloroplast. The segment covering 18 to 32 (ISSNLSPPNRKPNNS) has biased composition (polar residues). Positions 100-275 (RVAYQGVRGA…NVTRFLMLAR (176 aa)) constitute a Prephenate dehydratase domain. Residues 289-375 (SIVFSLEEGP…TFLRVLGSYP (87 aa)) enclose the ACT domain.

Expressed in roots, leaves, stems, flowers and siliques. Most abundant in leaves and seeds.

The protein localises to the plastid. Its subcellular location is the chloroplast stroma. It catalyses the reaction L-arogenate + H(+) = L-phenylalanine + CO2 + H2O. It carries out the reaction prephenate + H(+) = 3-phenylpyruvate + CO2 + H2O. It functions in the pathway amino-acid biosynthesis; L-phenylalanine biosynthesis; L-phenylalanine from L-arogenate: step 1/1. The protein operates within amino-acid biosynthesis; L-phenylalanine biosynthesis; phenylpyruvate from prephenate: step 1/1. Converts the prephenate produced from the shikimate-chorismate pathway into phenylalanine. Dehydratase that uses arogenate and prephenate as substrates. Utilzes more efficiently arogenate than prephenate. Required for chloroplast division prior to ARC5, but in an ARC3- and ARC6-dependent manner, especially involved in the Z-ring formation. This Arabidopsis thaliana (Mouse-ear cress) protein is Arogenate dehydratase/prephenate dehydratase 2, chloroplastic.